The sequence spans 104 residues: Signal recognition particle 19 kDa protein (104 aa).

Belongs to the SRP19 family. Part of the signal recognition particle protein translocation system, which is composed of SRP and FtsY. Archaeal SRP consists of a 7S RNA molecule of 300 nucleotides and two protein subunits: SRP54 and SRP19.

The protein resides in the cytoplasm. Its function is as follows. Involved in targeting and insertion of nascent membrane proteins into the cytoplasmic membrane. Binds directly to 7S RNA and mediates binding of the 54 kDa subunit of the SRP. The chain is Signal recognition particle 19 kDa protein from Archaeoglobus fulgidus (strain ATCC 49558 / DSM 4304 / JCM 9628 / NBRC 100126 / VC-16).